Consider the following 175-residue polypeptide: MVKLRETEVILRLCIVFFLLLTSCLIGLDSQTKEIAYIHKNVSFRYLLALEAELYIDVVVAAYNLVQLGLGWYNVEQKTSNPKWFSYLLDQTAAYVVFAGTSAAAQHSLLVVTGSRELQWMKWCYKFTRFCFQMGSAIILNYIAAALMVLLSSISAFNLFRLYSPKRFFRFKSSS.

Residues 1–7 (MVKLRET) are Cytoplasmic-facing. Residues 8 to 28 (EVILRLCIVFFLLLTSCLIGL) traverse the membrane as a helical segment. Topologically, residues 29-45 (DSQTKEIAYIHKNVSFR) are extracellular. Asn-41 carries an N-linked (GlcNAc...) asparagine glycan. A helical membrane pass occupies residues 46–66 (YLLALEAELYIDVVVAAYNLV). The Cytoplasmic segment spans residues 67-91 (QLGLGWYNVEQKTSNPKWFSYLLDQ). The helical transmembrane segment at 92–112 (TAAYVVFAGTSAAAQHSLLVV) threads the bilayer. At 113–136 (TGSRELQWMKWCYKFTRFCFQMGS) the chain is on the extracellular side. The chain crosses the membrane as a helical span at residues 137 to 157 (AIILNYIAAALMVLLSSISAF). Residues 158-175 (NLFRLYSPKRFFRFKSSS) are Cytoplasmic-facing.

This sequence belongs to the Casparian strip membrane proteins (CASP) family. Homodimer and heterodimers.

The protein resides in the cell membrane. The polypeptide is CASP-like protein 2C1 (Arabidopsis thaliana (Mouse-ear cress)).